Reading from the N-terminus, the 977-residue chain is MGAEEEVLVTLSGGAPWGFRLHGGAEQRKPLQVSKIRRRSQAGRAGLRERDQLLAINGVSCTNLSHASAMSLIDASGNQLVLTVQRLADEGPVQSPSPHELQVLSPLSPLSPEPPGAPVPQPLQPGSLRSPPDSEAYYGETDSDADGPATQEKPRRPRRRGPTRPTPPGAPPDEVYLSDSPAEPAPTIPGPPSQGDSRVSSPSWEDGAALQPPPAEALLLPHGPLRPGPHLIPMVGPVPHPVAEDLTTTYTQKAKQAKLQRAESLQEKSIKEAKTKCRTIASLLTAAPNPHSKGVLMFKKRRQRAKKYTLVSFGAAAGTGAEEEDGVPPTSESELDEEAFSDARSLTNQSDWDSPYLDMELARAGSRASEGQGSGLGGQLSEVSGRGVQLFEQQRQRADSSTQELARVEPAAMLNGEGLQSPPRAQSAPPEAAVLPPSPLPAPVASPRPFQPGGGAPTPAPSIFNRSARPFTPGLQGQRPTTTSVIFRPLAPKRANDSLGGLSPAPPPFLSSQGPTPLPSFTSGVPSHAPVSGSPSTPRSSGPVTATSSLYIPAPSRPVTPGGAPEPPAPPSAAAMTSTASIFLSAPLRPSARPEAPAPGPGAPEPPSAREQRISVPAARTGILQEARRRGTRKQMFRPGKEETKNSPNPELLSLVQNLDEKPRAGGAESGPEEDALSLGAEACNFMQPVGARSYKTLPHVTPKTPPPMAPKTPPPMTPKTPPPVAPKPPSRGLLDGLVNGAASSAGIPEPPRLQGRGGELFAKRQSRADRYVVEGTPGPGLGPRPRSPSPTPSLPPSWKYSPNIRAPPPIAYNPLLSPFFPQAARTLPKAQSQGPRATPKQGIKALDFMRHQPYQLKTAMFCFDEVPPTPGPIASGSPKTARVQEIRRFSTPAPQPTAEPLAPTVLAPRAATTLDEPIWRTELASAPVPSPAPPPEAPRGLGASPSSCGFQVARPRFSATRTGLQAHVWRPGAGHQ.

The PDZ domain maps to 6–88; it reads EVLVTLSGGA…QLVLTVQRLA (83 aa). 3 disordered regions span residues 91–226, 317–352, and 364–677; these read GPVQ…GPLR, AGTG…QSDW, and AGSR…EDAL. Phosphoserine is present on residues Ser-108 and Ser-111. The segment covering 109 to 123 has biased composition (pro residues); that stretch reads PLSPEPPGAPVPQPL. Position 141 is a phosphothreonine (Thr-141). Phosphoserine occurs at positions 143, 178, and 180. The segment covering 183-192 has biased composition (pro residues); sequence EPAPTIPGPP. Positions 194–203 are enriched in polar residues; sequence QGDSRVSSPS. Over residues 216–226 the composition is skewed to low complexity; sequence EALLLPHGPLR. Phosphoserine is present on residues Ser-345, Ser-350, Ser-374, Ser-381, and Ser-384. Omega-N-methylarginine is present on Arg-386. Residues 436–450 show a composition bias toward pro residues; sequence PPSPLPAPVASPRPF. An omega-N-methylarginine mark is found at Arg-466, Arg-469, and Arg-479. Residues 510–525 are compositionally biased toward polar residues; the sequence is LSSQGPTPLPSFTSGV. Low complexity-rich tracts occupy residues 530–545 and 572–595; these read PVSG…GPVT and SAAA…ARPE. A compositionally biased stretch (pro residues) spans 596–607; it reads APAPGPGAPEPP. 2 positions are modified to phosphoserine: Ser-670 and Ser-678. The interval 697–802 is disordered; it reads TLPHVTPKTP…PSLPPSWKYS (106 aa). Residues 704–730 show a composition bias toward pro residues; the sequence is KTPPPMAPKTPPPMTPKTPPPVAPKPP. A phosphothreonine mark is found at Thr-705 and Thr-713. Omega-N-methylarginine is present on Arg-757. Positions 781–796 are enriched in pro residues; that stretch reads GLGPRPRSPSPTPSLP. Phosphoserine occurs at positions 788 and 790. Thr-792 carries the phosphothreonine modification. 3 positions are modified to omega-N-methylarginine: Arg-806, Arg-826, and Arg-889. Ser-891 is subject to Phosphoserine. 2 positions are modified to phosphothreonine: Thr-892 and Thr-898. Arg-910 bears the Omega-N-methylarginine mark. An Asymmetric dimethylarginine; alternate modification is found at Arg-921. An Omega-N-methylarginine; alternate modification is found at Arg-921. Residues 922 to 950 are disordered; that stretch reads TELASAPVPSPAPPPEAPRGLGASPSSCG. A compositionally biased stretch (pro residues) spans 929–938; the sequence is VPSPAPPPEA. An omega-N-methylarginine mark is found at Arg-955 and Arg-957.

Belongs to the synaptopodin family.

It localises to the cytoplasm. The protein localises to the cytoskeleton. Its function is as follows. Actin-associated protein that may play a role in modulating actin-based shape. The chain is Synaptopodin 2-like protein (SYNPO2L) from Homo sapiens (Human).